A 776-amino-acid chain; its full sequence is Glutathione biosynthesis bifunctional protein GshAB (776 aa).

The interval 1–354 (MIKLDMTILD…QLADENENNI (354 aa)) is glutamate--cysteine ligase. An ATP-grasp domain is found at 521–775 (KLVLAENNIR…IGDKILDFLF (255 aa)). 548-606 (SLFKDKQIVVKPKSTNYGWGISIFKNKFTTEDYQEALNIAFSYDSSVIIEEFIPGDEFR) is an ATP binding site. Positions 728, 745, and 747 each coordinate Mg(2+). 3 residues coordinate Mn(2+): aspartate 728, glutamate 745, and asparagine 747.

It in the N-terminal section; belongs to the glutamate--cysteine ligase type 1 family. Type 2 subfamily. Monomer. Mg(2+) is required as a cofactor. Mn(2+) serves as cofactor.

The catalysed reaction is L-cysteine + L-glutamate + ATP = gamma-L-glutamyl-L-cysteine + ADP + phosphate + H(+). It carries out the reaction gamma-L-glutamyl-L-cysteine + glycine + ATP = glutathione + ADP + phosphate + H(+). The protein operates within sulfur metabolism; glutathione biosynthesis; glutathione from L-cysteine and L-glutamate: step 1/2. It participates in sulfur metabolism; glutathione biosynthesis; glutathione from L-cysteine and L-glutamate: step 2/2. Synthesizes glutathione from L-glutamate and L-cysteine via gamma-L-glutamyl-L-cysteine. The protein is Glutathione biosynthesis bifunctional protein GshAB of Listeria welshimeri serovar 6b (strain ATCC 35897 / DSM 20650 / CCUG 15529 / CIP 8149 / NCTC 11857 / SLCC 5334 / V8).